We begin with the raw amino-acid sequence, 142 residues long: Glia maturation factor beta (142 aa).

At Ser-2 the chain carries N-acetylserine. The ADF-H domain maps to 4–139; it reads SLVVCDVAED…TEEWLREKLG (136 aa).

It belongs to the actin-binding proteins ADF family. GMF subfamily. Post-translationally, phosphorylated; stimulated by phorbol ester.

This protein causes differentiation of brain cells, stimulation of neural regeneration, and inhibition of proliferation of tumor cells. The protein is Glia maturation factor beta (GMFB) of Homo sapiens (Human).